We begin with the raw amino-acid sequence, 197 residues long: Pyridoxal 5'-phosphate synthase subunit PdxT (197 aa).

52–54 serves as a coordination point for L-glutamine; sequence GES. Cys-83 functions as the Nucleophile in the catalytic mechanism. Residues Arg-115 and 142-143 each bind L-glutamine; that span reads IR. Residues His-178 and Glu-180 each act as charge relay system in the active site.

The protein belongs to the glutaminase PdxT/SNO family. As to quaternary structure, in the presence of PdxS, forms a dodecamer of heterodimers. Only shows activity in the heterodimer.

It catalyses the reaction aldehydo-D-ribose 5-phosphate + D-glyceraldehyde 3-phosphate + L-glutamine = pyridoxal 5'-phosphate + L-glutamate + phosphate + 3 H2O + H(+). The catalysed reaction is L-glutamine + H2O = L-glutamate + NH4(+). It participates in cofactor biosynthesis; pyridoxal 5'-phosphate biosynthesis. Functionally, catalyzes the hydrolysis of glutamine to glutamate and ammonia as part of the biosynthesis of pyridoxal 5'-phosphate. The resulting ammonia molecule is channeled to the active site of PdxS. The polypeptide is Pyridoxal 5'-phosphate synthase subunit PdxT (Korarchaeum cryptofilum (strain OPF8)).